Here is a 149-residue protein sequence, read N- to C-terminus: Large ribosomal subunit protein bL9 (149 aa).

The protein belongs to the bacterial ribosomal protein bL9 family.

In terms of biological role, binds to the 23S rRNA. In Chromobacterium violaceum (strain ATCC 12472 / DSM 30191 / JCM 1249 / CCUG 213 / NBRC 12614 / NCIMB 9131 / NCTC 9757 / MK), this protein is Large ribosomal subunit protein bL9.